A 67-amino-acid chain; its full sequence is Peptide Hp1239 (67 aa).

The signal sequence occupies residues 1-23 (MKTQFTVLLITLVLFQMLSQSEA). At phenylalanine 36 the chain carries Phenylalanine amide. Residues 40 to 67 (GLSDLSDLDELFDGEITKADLDLLREIM) constitute a propeptide that is removed on maturation.

The protein belongs to the non-disulfide-bridged peptide (NDBP) superfamily. Short antimicrobial peptide (group 4) family. As to expression, expressed by the venom gland.

It is found in the secreted. The protein localises to the target cell membrane. Its function is as follows. Amphipathic peptide with antibacterial activities. Shows antiviral activities against the herpes simplex virus type-1. It potently inhibits the initial infection by provoking the rupture of viral envelop and the dissociation of proteins from the virions (EC(50) is 0.41 uM). It also effectively inhibits viral attachment (EC(50) is 5.73 uM), viral entry (EC(50) is 4.32 uM) and viral proliferation after infection (EC(50) is 8.41 uM). Morever, it enters mammalian tested cells (Vero) and reduces the intracellular infectivity. In Heterometrus petersii (Asian forest scorpion), this protein is Peptide Hp1239.